Here is a 133-residue protein sequence, read N- to C-terminus: Phosphoribosyl-ATP pyrophosphatase (133 aa).

Residues 1-22 (MGKPATKPAPKPSKQQDDKKSD) are disordered.

It belongs to the PRA-PH family.

It localises to the cytoplasm. The enzyme catalyses 1-(5-phospho-beta-D-ribosyl)-ATP + H2O = 1-(5-phospho-beta-D-ribosyl)-5'-AMP + diphosphate + H(+). It participates in amino-acid biosynthesis; L-histidine biosynthesis; L-histidine from 5-phospho-alpha-D-ribose 1-diphosphate: step 2/9. The protein is Phosphoribosyl-ATP pyrophosphatase of Gluconobacter oxydans (strain 621H) (Gluconobacter suboxydans).